Here is a 228-residue protein sequence, read N- to C-terminus: Methylthioribulose-1-phosphate dehydratase (228 aa).

Cys-92 serves as a coordination point for substrate. Residues His-110 and His-112 each contribute to the Zn(2+) site. The active-site Proton donor/acceptor is the Glu-135. Residue His-192 participates in Zn(2+) binding.

The protein belongs to the aldolase class II family. MtnB subfamily. It depends on Zn(2+) as a cofactor.

The protein resides in the cytoplasm. It is found in the nucleus. It catalyses the reaction 5-(methylsulfanyl)-D-ribulose 1-phosphate = 5-methylsulfanyl-2,3-dioxopentyl phosphate + H2O. Its pathway is amino-acid biosynthesis; L-methionine biosynthesis via salvage pathway; L-methionine from S-methyl-5-thio-alpha-D-ribose 1-phosphate: step 2/6. In terms of biological role, catalyzes the dehydration of methylthioribulose-1-phosphate (MTRu-1-P) into 2,3-diketo-5-methylthiopentyl-1-phosphate (DK-MTP-1-P). This chain is Methylthioribulose-1-phosphate dehydratase, found in Schizosaccharomyces pombe (strain 972 / ATCC 24843) (Fission yeast).